A 189-amino-acid chain; its full sequence is Isopentenyl-diphosphate Delta-isomerase 2 (189 aa).

2 residues coordinate Mn(2+): His-24 and His-30. A Nudix hydrolase domain is found at 28–160; that stretch reads ALHRAISIFV…PETYSFWLAA (133 aa). Cys-65 is an active-site residue. Residue Cys-65 participates in Mg(2+) binding. His-67 is a Mn(2+) binding site. Glu-85 lines the Mg(2+) pocket. Mn(2+) is bound by residues Glu-110 and Glu-112. Glu-112 is a catalytic residue.

This sequence belongs to the IPP isomerase type 1 family. Mg(2+) serves as cofactor. Mn(2+) is required as a cofactor.

The protein localises to the cytoplasm. It carries out the reaction isopentenyl diphosphate = dimethylallyl diphosphate. The protein operates within isoprenoid biosynthesis; dimethylallyl diphosphate biosynthesis; dimethylallyl diphosphate from isopentenyl diphosphate: step 1/1. Functionally, catalyzes the 1,3-allylic rearrangement of the homoallylic substrate isopentenyl (IPP) to its highly electrophilic allylic isomer, dimethylallyl diphosphate (DMAPP). This chain is Isopentenyl-diphosphate Delta-isomerase 2, found in Aromatoleum aromaticum (strain DSM 19018 / LMG 30748 / EbN1) (Azoarcus sp. (strain EbN1)).